The following is a 535-amino-acid chain: Light-independent protochlorophyllide reductase subunit B (535 aa).

Residue D36 coordinates [4Fe-4S] cluster. The active-site Proton donor is the D292. A substrate-binding site is contributed by 428–429; it reads GL.

It belongs to the ChlB/BchB/BchZ family. As to quaternary structure, protochlorophyllide reductase is composed of three subunits; BchL, BchN and BchB. Forms a heterotetramer of two BchB and two BchN subunits. It depends on [4Fe-4S] cluster as a cofactor.

It catalyses the reaction chlorophyllide a + oxidized 2[4Fe-4S]-[ferredoxin] + 2 ADP + 2 phosphate = protochlorophyllide a + reduced 2[4Fe-4S]-[ferredoxin] + 2 ATP + 2 H2O. It functions in the pathway porphyrin-containing compound metabolism; bacteriochlorophyll biosynthesis (light-independent). Functionally, component of the dark-operative protochlorophyllide reductase (DPOR) that uses Mg-ATP and reduced ferredoxin to reduce ring D of protochlorophyllide (Pchlide) to form chlorophyllide a (Chlide). This reaction is light-independent. The NB-protein (BchN-BchB) is the catalytic component of the complex. This chain is Light-independent protochlorophyllide reductase subunit B, found in Pelodictyon phaeoclathratiforme (strain DSM 5477 / BU-1).